The primary structure comprises 507 residues: ATP synthase subunit alpha, chloroplastic (507 aa).

ATP is bound at residue 170–177; sequence GDRQTGKT.

Belongs to the ATPase alpha/beta chains family. F-type ATPases have 2 components, CF(1) - the catalytic core - and CF(0) - the membrane proton channel. CF(1) has five subunits: alpha(3), beta(3), gamma(1), delta(1), epsilon(1). CF(0) has four main subunits: a, b, b' and c.

It localises to the plastid. It is found in the chloroplast thylakoid membrane. The catalysed reaction is ATP + H2O + 4 H(+)(in) = ADP + phosphate + 5 H(+)(out). Produces ATP from ADP in the presence of a proton gradient across the membrane. The alpha chain is a regulatory subunit. This is ATP synthase subunit alpha, chloroplastic from Morus indica (Mulberry).